The chain runs to 2542 residues: Probable polyketide synthase 41 (2542 aa).

The Ketosynthase family 3 (KS3) domain maps to 11–441 (CNKVAIIGIG…GSNCCLIVSS (431 aa)). Residues Cys177, His318, and His360 each act as for beta-ketoacyl synthase activity in the active site. An acyl/malonyl transferase region spans residues 628–661 (GIKPSIIVGHSLGEISSSYCSGMIDLDTFCYLIY). Catalysis depends on Ser638, which acts as the For acyl/malonyl transferase activity. Residues 926 to 1059 (INHLGISNSN…ANFQLFSRGP (134 aa)) are N-terminal hotdog fold. The PKS/mFAS DH domain occupies 926-1231 (INHLGISNSN…FKSTTKIKDP (306 aa)). The active-site Proton acceptor; for dehydratase activity is His959. The C-terminal hotdog fold stretch occupies residues 1083-1231 (NLTKLSKQEL…FKSTTKIKDP (149 aa)). Catalysis depends on Asp1145, which acts as the Proton donor; for dehydratase activity. Residues 2459-2537 (NVELTVDQLI…SFIQLVKNSM (79 aa)) enclose the Carrier domain. Ser2496 carries the post-translational modification O-(pantetheine 4'-phosphoryl)serine.

The cofactor is pantetheine 4'-phosphate.

Probable polyketide synthase. The protein is Probable polyketide synthase 41 (pks41) of Dictyostelium discoideum (Social amoeba).